The sequence spans 62 residues: MDVKELRNQSVSALNEMLIKLLKEHFEFRMQHKSSQLDNFSKLGKTKKSIAQIKTIIRQKQA.

Belongs to the universal ribosomal protein uL29 family.

The polypeptide is Large ribosomal subunit protein uL29 (Vesicomyosocius okutanii subsp. Calyptogena okutanii (strain HA)).